Consider the following 552-residue polypeptide: Leiomodin-2 (552 aa).

Residues 1 to 47 (MSTFGYRRELSKYEDIDEDELLASLTEEELKELERELEDIEPDRNLP) are interaction with tropomyosin alpha. 2 interaction with actin regions span residues 1–169 (MSTF…SSHV) and 170–498 (RHKK…KEIK). The stretch at 13–46 (YEDIDEDELLASLTEEELKELERELEDIEPDRNL) forms a coiled coil. Disordered regions lie at residues 33–67 (LERE…FSRE), 87–191 (GACE…DGKD), and 364–531 (MDKQ…DNLM). Over residues 51–64 (RQKSLTEKTPTGTF) the composition is skewed to polar residues. Positions 86 to 151 (LGACEKDSEQ…DDEDEEKQNS (66 aa)) form a coiled coil. 2 stretches are compositionally biased toward acidic residues: residues 93 to 108 (SEQE…EECF) and 115 to 147 (VSEE…EDEE). The span at 364 to 377 (MDKQRQKRMQEQRQ) shows a compositional bias: basic and acidic residues. Residues 398-415 (PRSSPYTSPKSSPWSSPK) show a composition bias toward low complexity. Residues 425 to 450 (SQPPAPAPPPPPPPPPPPPPPPPPVI) are compositionally biased toward pro residues. Positions 478 to 488 (QKKKKGKKGKK) are enriched in basic residues. Residues 489–513 (HENSILKEIKDSLKSVSDRKSEEGS) show a composition bias toward basic and acidic residues. A compositionally biased stretch (polar residues) spans 514–524 (RPSTRPSTPQR). An interaction with actin 3 region spans residues 526 to 545 (LHDNLMEAIRASSIKQLRRV). Residues 526-545 (LHDNLMEAIRASSIKQLRRV) enclose the WH2 domain.

It belongs to the tropomodulin family. Can bind at least three actin monomers and thereby provides a nucleus for actin filament formation. Interacts (via N-terminus) with tropomyosin alpha (TPM1) (via N-terminus). May also interact with TPM2 (via N-terminus).

Its subcellular location is the cytoplasm. It localises to the myofibril. The protein resides in the sarcomere. The protein localises to the m line. It is found in the cytoskeleton. Functionally, mediates nucleation of actin filaments and thereby promotes actin polymerization. Plays a role in the regulation of actin filament length. Required for normal sarcomere organization in the heart, and for normal heart function. This chain is Leiomodin-2 (LMOD2), found in Gallus gallus (Chicken).